A 66-amino-acid polypeptide reads, in one-letter code: Large ribosomal subunit protein bL33c (66 aa).

Belongs to the bacterial ribosomal protein bL33 family.

The protein localises to the plastid. Its subcellular location is the chloroplast. This chain is Large ribosomal subunit protein bL33c, found in Brachypodium distachyon (Purple false brome).